A 419-amino-acid chain; its full sequence is Acyl-[acyl-carrier-protein] hydrolase FATB1, chloroplastic (419 aa).

The N-terminal 50 residues, 1-50 (MVAAAATSAFFPVPAPGTSPKPGKSGNWPSSLSPTFKPKSIPNGGFQVKA), are a transit peptide targeting the chloroplast. The interval 1-84 (MVAAAATSAF…DTSSSPPPRA (84 aa)) is disordered. Positions 61–78 (SAVNLKSGSLNTQEDTSS) are enriched in polar residues. Active-site residues include N315, H317, and C352. The disordered stretch occupies residues 390–419 (SRTEWRPKNAGTNGAISTSTAKTSNGNSVS). Positions 399 to 419 (AGTNGAISTSTAKTSNGNSVS) are enriched in polar residues.

Belongs to the acyl-ACP thioesterase family.

It localises to the plastid. Its subcellular location is the chloroplast. It carries out the reaction octanoyl-[ACP] + H2O = octanoate + holo-[ACP] + H(+). It catalyses the reaction decanoyl-[ACP] + H2O = decanoate + holo-[ACP] + H(+). In terms of biological role, plays an essential role in chain termination during de novo fatty acid synthesis. Possesses thioesterase activity for short chain acyl-ACPs. Substrate preference is 8:0 &gt; 10:0. The chain is Acyl-[acyl-carrier-protein] hydrolase FATB1, chloroplastic from Cuphea viscosissima (Blue waxweed).